Reading from the N-terminus, the 368-residue chain is tRNA-specific 2-thiouridylase MnmA (368 aa).

ATP is bound by residues 11-18 and Met-37; that span reads GMSGGVDS. Residues 97–99 form an interaction with target base in tRNA region; sequence NPD. Residue Cys-102 is the Nucleophile of the active site. An intrachain disulfide couples Cys-102 to Cys-199. Position 127 (Gly-127) interacts with ATP. Residues 149–151 are interaction with tRNA; the sequence is KDQ. The active-site Cysteine persulfide intermediate is the Cys-199. An interaction with tRNA region spans residues 311–312; sequence RY.

This sequence belongs to the MnmA/TRMU family. In terms of assembly, interacts with TusE.

Its subcellular location is the cytoplasm. The catalysed reaction is S-sulfanyl-L-cysteinyl-[protein] + uridine(34) in tRNA + AH2 + ATP = 2-thiouridine(34) in tRNA + L-cysteinyl-[protein] + A + AMP + diphosphate + H(+). In terms of biological role, catalyzes the 2-thiolation of uridine at the wobble position (U34) of tRNA(Lys), tRNA(Glu) and tRNA(Gln), leading to the formation of s(2)U34, the first step of tRNA-mnm(5)s(2)U34 synthesis. Sulfur is provided by IscS, via a sulfur-relay system. Binds ATP and its substrate tRNAs. The sequence is that of tRNA-specific 2-thiouridylase MnmA from Salmonella arizonae (strain ATCC BAA-731 / CDC346-86 / RSK2980).